The primary structure comprises 114 residues: Tyrosine-protein phosphatase 11 (114 aa).

The Tyrosine-protein phosphatase domain maps to 1 to 114 (WRMIWEHNTR…EAKHTGPTIV (114 aa)). Asp-81 contributes to the substrate binding site.

This sequence belongs to the protein-tyrosine phosphatase family.

The catalysed reaction is O-phospho-L-tyrosyl-[protein] + H2O = L-tyrosyl-[protein] + phosphate. This is Tyrosine-protein phosphatase 11 (STY-11) from Styela plicata (Wrinkled sea squirt).